Here is a 451-residue protein sequence, read N- to C-terminus: Probable metal transport system membrane protein CT_069 (451 aa).

8 helical membrane passes run 14–34, 38–58, 70–90, 100–120, 145–165, 192–212, 233–253, and 269–289; these read SFLA…ILLV, PLLS…GALL, WVII…ISFL, SALC…VSYV, TEAK…WWWY, VLVF…ILLI, ILIL…YFSV, and ILPT…LCLI. A disordered region spans residues 432 to 451; the sequence is PDYDPHQREIPKRTRKSDGC. Positions 434-451 are enriched in basic and acidic residues; it reads YDPHQREIPKRTRKSDGC.

The protein belongs to the ABC-3 integral membrane protein family.

It localises to the cell inner membrane. Part of an ATP-driven transport system CT_067/CT_068/CT_069/CT_070 for a metal. The polypeptide is Probable metal transport system membrane protein CT_069 (Chlamydia trachomatis serovar D (strain ATCC VR-885 / DSM 19411 / UW-3/Cx)).